Here is a 942-residue protein sequence, read N- to C-terminus: Mitogen-activated protein kinase kinase kinase A (942 aa).

The PB1 domain occupies 15–96 (FIRIKCILGD…NPTKIISTKF (82 aa)). Residues 107-144 (PLSSSLSPTQSLILNNNNNNNNNNNNNNNNNNNNNNNN) are disordered. The Protein kinase domain occupies 170–429 (WQKGQILGRG…ANQLLKHPFI (260 aa)). ATP contacts are provided by residues 176–184 (LGRGGYGSV) and Lys199. The active-site Proton acceptor is the Asp297. A compositionally biased stretch (low complexity) spans 441-486 (ISPTTTLSTNTTNTTATTTTTNNATNSNINQQQQQQQQQPPTRTQR). Positions 441–512 (ISPTTTLSTN…ISTSTSSSSS (72 aa)) are disordered. Polar residues predominate over residues 487–498 (VSISAGSSNNKR). Residues 500-512 (TPPISTSTSSSSS) are compositionally biased toward low complexity. Residues 513-533 (SILNNFSINIILPINLIILIF) traverse the membrane as a helical segment. The 47-residue stretch at 518–564 (FSINIILPINLIILIFREIKPNFVNTLSRVCKHWKQIIDDDELWNKY) folds into the F-box domain. 7 WD repeats span residues 607–646 (GHDKGVFCVKLIDDQGMVLSGGEDKKLKVWDISGNHHHNH), 690–733 (GHSG…TLFT), 736–778 (NHQE…STLR), 780–825 (HTGG…KVRS), 828–865 (QHTEDVLCCYVFDQKVVTGSCDGTIKLWDIGTGKTIST), 872–909 (RQKNYVWTVQFDQSKIISSGKTGIIRIWDIYNERDSRS), and 912–942 (GHHETIFSLQFNNQKLITGSLDKLVKIWSID).

The protein belongs to the protein kinase superfamily. STE Ser/Thr protein kinase family. MAP kinase kinase kinase subfamily. In terms of assembly, interacts with ubcB and ubpB. The cofactor is Mg(2+). Post-translationally, ubcB and ubpB differentially control ubiquitination/deubiquitination and degradation in a cell-type-specific and temporally regulated manner.

It is found in the membrane. The catalysed reaction is L-seryl-[protein] + ATP = O-phospho-L-seryl-[protein] + ADP + H(+). It carries out the reaction L-threonyl-[protein] + ATP = O-phospho-L-threonyl-[protein] + ADP + H(+). Its function is as follows. Regulates cell-type differentiation and spatial patterning, required for the proper induction and maintenance of prespore cell differentiation. The polypeptide is Mitogen-activated protein kinase kinase kinase A (Dictyostelium discoideum (Social amoeba)).